The chain runs to 391 residues: S-adenosylmethionine synthase (391 aa).

Position 14 (histidine 14) interacts with ATP. Aspartate 16 is a binding site for Mg(2+). Position 42 (glutamate 42) interacts with K(+). Positions 55 and 98 each coordinate L-methionine. Residues 98–108 (QSPDIAMGVDE) are flexible loop. ATP is bound by residues 172–174 (DGK), 238–239 (RF), aspartate 247, 253–254 (RK), alanine 270, and lysine 274. Aspartate 247 is an L-methionine binding site. Lysine 278 serves as a coordination point for L-methionine.

This sequence belongs to the AdoMet synthase family. Homotetramer; dimer of dimers. The cofactor is Mg(2+). Requires K(+) as cofactor.

The protein resides in the cytoplasm. It carries out the reaction L-methionine + ATP + H2O = S-adenosyl-L-methionine + phosphate + diphosphate. It functions in the pathway amino-acid biosynthesis; S-adenosyl-L-methionine biosynthesis; S-adenosyl-L-methionine from L-methionine: step 1/1. Functionally, catalyzes the formation of S-adenosylmethionine (AdoMet) from methionine and ATP. The overall synthetic reaction is composed of two sequential steps, AdoMet formation and the subsequent tripolyphosphate hydrolysis which occurs prior to release of AdoMet from the enzyme. This Clostridium tetani (strain Massachusetts / E88) protein is S-adenosylmethionine synthase.